Consider the following 382-residue polypeptide: Membrane protein MLC1 (382 aa).

Positions 1-28 (MTREGQFREELGYDRMPTLERGRQDAGR) are enriched in basic and acidic residues. Residues 1-43 (MTREGQFREELGYDRMPTLERGRQDAGRQDPGSYTPDSKPKDL) are disordered. 4 helical membrane passes run 58–78 (WVFSVLMGSCLLVTSGFSLYL), 88–107 (YLRCAAGSCIPSAIVSFAVG), 117–137 (FQILFVSTFAVTTTCLIWFGC), and 148–168 (INFNLILLLLLELLMAATVII). 3 positions are modified to phosphoserine: serine 183, serine 185, and serine 188. 4 helical membrane-spanning segments follow: residues 205-225 (SVVEVIAGVSAVLGGVIALNV), 234-254 (LSVTFFWILVACFPSAIASHV), 263-283 (LVEVLIAISSLTSPLLFTASG), and 309-329 (LLLLLLLLLLLQGGLNTGTAI).

Interacts with ATP1B1. Part of a complex containing ATP1B1, TRPV4, AQP4 and HEPACAM.

The protein resides in the membrane. Its subcellular location is the cell membrane. The protein localises to the cytoplasm. It is found in the perinuclear region. It localises to the endoplasmic reticulum. In terms of biological role, transmembrane protein mainly expressed in brain astrocytes that may play a role in transport across the blood-brain and brain-cerebrospinal fluid barriers. Regulates the response of astrocytes to hypo-osmosis by promoting calcium influx. May function as regulatory protein of membrane protein complexes such as ion channels. The polypeptide is Membrane protein MLC1 (Mus musculus (Mouse)).